The sequence spans 853 residues: Deubiquitinase otu (853 aa).

A disordered region spans residues 1–20 (MDMQVQRPITSGSRQAPDPY). In terms of domain architecture, OTU spans 29–150 (LYRKHTARDA…ENHFDSVYDV (122 aa)). Aspartate 37 is a catalytic residue. Residue serine 40 is the Nucleophile of the active site. Residue histidine 143 is part of the active site. The Tudor domain occupies 336–396 (NFKVGAKCKV…HPLPPDEYRP (61 aa)). An LC domain region spans residues 396–853 (PWSLPFRYHR…AAVYAATRHH (458 aa)). Residues 460–470 (QDDEQRDHNDP) are compositionally biased toward basic and acidic residues. 4 disordered regions span residues 460 to 531 (QDDE…YVPM), 681 to 704 (AVES…LEKS), 732 to 794 (GPAA…AAQG), and 817 to 853 (NMDP…TRHH). Residues 499-517 (SRVQPQNSSSSQNQEVSGS) show a composition bias toward low complexity. Residues 747 to 758 (NGSQFSFYTTPS) show a composition bias toward polar residues. Pro residues predominate over residues 769-778 (LLQPPPPPPI). Composition is skewed to low complexity over residues 783-794 (AGPPQLGGAAQG) and 820-838 (PSAQ…APLS).

Self aggregates, forming amyloid-like fibrillar helical structures; protein aggregation is mediated by the C-terminal LC domain, is enhanced by RNA binding and is essential for deubiquitinase activity. Interacts (via OTU domain) with bam (via C-terminus); the interaction enhances otu aggregation and deubiquitinase activity. Together with bam interacts with CycA/cyclin-A; the interaction stabilizes CycA by promoting its deubiquitination. Together with bam interacts with Traf6. Interacts with Hrb27C; the interaction is RNA-independent. Associates (via N-terminus) with mRNP complexes; the interaction is weak. As to expression, expressed at high levels in the ovary, at low levels in the brain and fat body, and at moderate levels in the gut.

The protein resides in the cytoplasm. Its subcellular location is the cell cortex. It localises to the perinuclear region. Activated by protein aggregation, which is mediated by the LC domain and enhanced by RNA binding. Catalytic component of a deubiquitinase complex consisting of bam and otu. The complex deubiquitinates K63-linked polyubiquitinated proteins; this antagonizes the ubiquitination activity of Traf6 and regulates the IMD immune signaling pathway. Otu-bam deubiquitinase activity is regulated by Traf6 dependent immune signaling regulation of bam expression levels; this forms a feedback loop that regulates the IMD immune signaling pathway and balances gut immune activity during aging. The complex deubiquitinates and stabilizes CycA/cyclin-A to regulate CycA-dependent differentiation. Involved in grk mRNA localization to the dorsal anterior region of the oocyte required for dorsal-ventral axis determination; may function as a ribonuclear protein complex together with sqd and Hrb27C. May regulate actin cytoskeleton organization in differentiating cystocytes during fusome maturation; required for efficient nurse cell cytoplasmic dumping during oogenesis. Essential for female fertility; involved in germ cell proliferation and germ cell differentiation. Functionally, involved in the early stages of germ cell proliferation and differentiation during oogenesis. Required for polytene chromosome dispersal in nurse cells during oogenesis. In terms of biological role, involved in the later stages of germ cell proliferation and differentiation during oogenesis. The sequence is that of Deubiquitinase otu from Drosophila melanogaster (Fruit fly).